We begin with the raw amino-acid sequence, 87 residues long: Putative regulatory protein BCQ_3657 (87 aa).

This sequence belongs to the RemA family.

The protein is Putative regulatory protein BCQ_3657 of Bacillus cereus (strain Q1).